Here is a 588-residue protein sequence, read N- to C-terminus: MAEMGSKGVTAGKIASNVQKKLTRAQEKVLQKLGKADETKDEQFEQCVQNFNKQLTEGTRLQKDLRTYLASVKAMHEASKKLSECLQEVYEPEWPGRDEANKIAENNDLLWMDYHQKLVDQALLTMDTYLGQFPDIKSRIAKRGRKLVDYDSARHHYESLQTAKKKDEAKIAKPVSLLEKAAPQWCQGKLQAHLVAQTNLLRNQAEEELIKAQKVFEEMNVDLQEELPSLWNSRVGFYVNTFQSIAGLEENFHKEMSKLNQNLNDVLVSLEKQHGSNTFTVKAQPSDNAPEKGNKSPSPPPDGSPAATPEIRVNHEPEPASGASPGATIPKSPSQLRKGPPVPPPPKHTPSKEMKQEQILSLFDDAFVPEISVTTPSQFEAPGPFSEQASLLDLDFEPLPPVASPVKAPTPSGQSIPWDLWEPTESQAGILPSGEPSSAEGSFAVAWPSQTAEPGPAQPAEASEVVGGAQEPGETAASEATSSSLPAVVVETFSATVNGAVEGSAGTGRLDLPPGFMFKVQAQHDYTATDTDELQLKAGDVVLVIPFQNPEEQDEGWLMGVKESDWNQHKELEKCRGVFPENFTERVQ.

The residue at position 2 (alanine 2) is an N-acetylalanine. Residues alanine 2 to alanine 122 form an interaction with BIN2 region. Coiled coils occupy residues alanine 15–glutamate 42 and histidine 193–histidine 274. A BAR domain is found at valine 29–serine 276. A disordered region spans residues phenylalanine 279–lysine 355. Serine 296, serine 298, and serine 304 each carry phosphoserine. Position 308 is a phosphothreonine (threonine 308). A phosphoserine mark is found at serine 324 and serine 332. A clathrin-binding region spans residues phenylalanine 379 to glutamate 422. A disordered region spans residues proline 448–serine 484. Residues glutamate 474 to serine 484 show a composition bias toward low complexity. Positions glycine 515–glutamine 588 constitute an SH3 domain.

In terms of assembly, heterodimer with AMPH. Binds SH3GLB1. Interacts (via SH3 domain) with DNM1. Interacts with SYNJ1. Interacts (via SH3 domain) with DNM2. Interacts with CLTC. Interacts with AP2A2. Interacts with AP2B1. Interacts with MYC (via N-terminal transactivation domain); the interaction requires the integrity of the conserved MYC box regions 1 and 2. Interacts with BIN2. Interacts with SNX4. Interacts (via BAR domain) with BACE1. Binds (via BAR domain) F-actin. Post-translationally, phosphorylated by protein kinase C. As to expression, isoform 1 is expressed mainly in the brain. Isoform 2 is widely expressed.

The protein resides in the nucleus. The protein localises to the cytoplasm. Its subcellular location is the endosome. It is found in the cell membrane. It localises to the sarcolemma. The protein resides in the T-tubule. In terms of biological role, is a key player in the control of plasma membrane curvature, and membrane shaping and remodeling. Required in muscle cells for the formation of T-tubules, tubular invaginations of the plasma membrane that function in depolarization-contraction coupling. Required in muscle cells for the formation of T-tubules, tubular invaginations of the plasma membrane that function in depolarization-contraction coupling. Is a negative regulator of endocytosis. Is also involved in the regulation of intracellular vesicles sorting, modulation of BACE1 trafficking and the control of amyloid-beta production. In neuronal circuits, endocytosis regulation may influence the internalization of PHF-tau aggregates. May be involved in the regulation of MYC activity and the control cell proliferation. In Mus musculus (Mouse), this protein is Myc box-dependent-interacting protein 1 (Bin1).